The primary structure comprises 65 residues: Photosystem II reaction center protein J (65 aa).

A helical membrane pass occupies residues 35–55 (LWLVATAGGIAVIFVLGIFFY).

It belongs to the PsbJ family. As to quaternary structure, PSII is composed of 1 copy each of membrane proteins PsbA, PsbB, PsbC, PsbD, PsbE, PsbF, PsbH, PsbI, PsbJ, PsbK, PsbL, PsbM, PsbT, PsbX, PsbY, Psb30/Ycf12, peripheral proteins PsbO, CyanoQ (PsbQ), PsbU, PsbV and a large number of cofactors. It forms dimeric complexes.

Its subcellular location is the cellular thylakoid membrane. In terms of biological role, one of the components of the core complex of photosystem II (PSII). PSII is a light-driven water:plastoquinone oxidoreductase that uses light energy to abstract electrons from H(2)O, generating O(2) and a proton gradient subsequently used for ATP formation. It consists of a core antenna complex that captures photons, and an electron transfer chain that converts photonic excitation into a charge separation. This is Photosystem II reaction center protein J from Prochlorococcus marinus (strain MIT 9312).